A 118-amino-acid chain; its full sequence is Beta-2-microglobulin (118 aa).

A signal peptide spans 1–20 (MARFVVLVLLGLLYLSHLDA). Positions 25–113 (PKVQVYSRHP…TTLSEPKVVK (89 aa)) constitute an Ig-like C1-type domain. Cysteine 45 and cysteine 99 form a disulfide bridge.

It belongs to the beta-2-microglobulin family. Heterodimer of an alpha chain and a beta chain. Beta-2-microglobulin is the beta-chain of major histocompatibility complex class I molecules.

It is found in the secreted. Functionally, component of the class I major histocompatibility complex (MHC). Involved in the presentation of peptide antigens to the immune system. This Felis catus (Cat) protein is Beta-2-microglobulin (B2M).